Consider the following 436-residue polypeptide: Trigger factor (436 aa).

The region spanning 161-246 is the PPIase FKBP-type domain; that stretch reads DLRVNMDFVG…LNKVEKQDLP (86 aa).

It belongs to the FKBP-type PPIase family. Tig subfamily.

The protein resides in the cytoplasm. It carries out the reaction [protein]-peptidylproline (omega=180) = [protein]-peptidylproline (omega=0). Its function is as follows. Involved in protein export. Acts as a chaperone by maintaining the newly synthesized protein in an open conformation. Functions as a peptidyl-prolyl cis-trans isomerase. This is Trigger factor from Tolumonas auensis (strain DSM 9187 / NBRC 110442 / TA 4).